A 213-amino-acid chain; its full sequence is Insulin-like peptide INSL6 (213 aa).

An N-terminal signal peptide occupies residues 1–20; that stretch reads MPRLLRLSLLWLGLLLVRFS. 3 disulfides stabilise this stretch: Cys33/Cys179, Cys45/Cys192, and Cys178/Cys183. The propeptide at 55–168 is connecting peptide; that stretch reads FEEETPFSRL…SNLFWGHHPQ (114 aa). Residues 201–213 constitute a propeptide that is removed on maturation; it reads LKEKRSSLVTKIY.

Belongs to the insulin family. In terms of tissue distribution, testis specific.

It is found in the secreted. Its function is as follows. May have a role in sperm development and fertilization. This chain is Insulin-like peptide INSL6 (INSL6), found in Homo sapiens (Human).